The sequence spans 156 residues: Small ribosomal subunit protein uS7 (156 aa).

This sequence belongs to the universal ribosomal protein uS7 family. As to quaternary structure, part of the 30S ribosomal subunit. Contacts proteins S9 and S11.

In terms of biological role, one of the primary rRNA binding proteins, it binds directly to 16S rRNA where it nucleates assembly of the head domain of the 30S subunit. Is located at the subunit interface close to the decoding center, probably blocks exit of the E-site tRNA. The chain is Small ribosomal subunit protein uS7 from Haemophilus influenzae (strain 86-028NP).